Reading from the N-terminus, the 221-residue chain is Probable N-acetyl-alpha-D-glucosaminyl L-malate deacetylase 2 (221 aa).

Residues histidine 11, aspartate 14, and histidine 125 each coordinate Zn(2+).

Belongs to the PIGL family. It depends on Zn(2+) as a cofactor.

It catalyses the reaction (S)-malyl N-acetyl-alpha-D-glucosaminide + H2O = (S)-malyl alpha-D-glucosaminide + acetate. Functionally, involved in bacillithiol (BSH) biosynthesis. Catalyzes the second step of the pathway, the deacetylation of N-acetylglucosaminylmalate (GlcNAc-Mal) to glucosamine malate (GlcN-Mal). In Bacillus subtilis (strain 168), this protein is Probable N-acetyl-alpha-D-glucosaminyl L-malate deacetylase 2.